We begin with the raw amino-acid sequence, 63 residues long: Rubredoxin-2 (63 aa).

One can recognise a Rubredoxin-like domain in the interval 8-59 (YKLFRCLQCGFEYDEAIGWPDDGIEPGTRWDEIPEDWSCPDCGAAKVDFEMV). Residues Cys-13, Cys-16, Cys-46, and Cys-49 each coordinate Fe cation.

The protein belongs to the rubredoxin family. Fe(3+) serves as cofactor.

Its function is as follows. Involved in the hydrocarbon hydroxylating system, which transfers electrons from NADH to rubredoxin reductase and then through rubredoxin to alkane 1 monooxygenase. The polypeptide is Rubredoxin-2 (rubA2) (Rhodococcus erythropolis (Arthrobacter picolinophilus)).